A 435-amino-acid chain; its full sequence is UDP-N-acetylmuramoylalanine--D-glutamate ligase (435 aa).

114–120 (GSNGKST) contributes to the ATP binding site.

Belongs to the MurCDEF family.

It localises to the cytoplasm. It carries out the reaction UDP-N-acetyl-alpha-D-muramoyl-L-alanine + D-glutamate + ATP = UDP-N-acetyl-alpha-D-muramoyl-L-alanyl-D-glutamate + ADP + phosphate + H(+). The protein operates within cell wall biogenesis; peptidoglycan biosynthesis. Functionally, cell wall formation. Catalyzes the addition of glutamate to the nucleotide precursor UDP-N-acetylmuramoyl-L-alanine (UMA). The sequence is that of UDP-N-acetylmuramoylalanine--D-glutamate ligase from Haemophilus ducreyi (strain 35000HP / ATCC 700724).